Consider the following 191-residue polypeptide: Hypoxanthine/guanine phosphoribosyltransferase (191 aa).

The protein belongs to the purine/pyrimidine phosphoribosyltransferase family. Archaeal HPRT subfamily. Homodimer.

The protein localises to the cytoplasm. It catalyses the reaction IMP + diphosphate = hypoxanthine + 5-phospho-alpha-D-ribose 1-diphosphate. The catalysed reaction is GMP + diphosphate = guanine + 5-phospho-alpha-D-ribose 1-diphosphate. The protein operates within purine metabolism; IMP biosynthesis via salvage pathway; IMP from hypoxanthine: step 1/1. Its function is as follows. Catalyzes a salvage reaction resulting in the formation of IMP that is energically less costly than de novo synthesis. The protein is Hypoxanthine/guanine phosphoribosyltransferase of Methanocella paludicola (strain DSM 17711 / JCM 13418 / NBRC 101707 / SANAE).